Consider the following 287-residue polypeptide: Large ribosomal subunit protein uL2 (287 aa).

A disordered region spans residues 221–287 (RGSVMNPCDH…SKRSRGGRDS (67 aa)). The segment covering 258–287 (KTRKKNKPSNKLVVRRRRRISKRSRGGRDS) has biased composition (basic residues).

Belongs to the universal ribosomal protein uL2 family. In terms of assembly, part of the 50S ribosomal subunit. Forms a bridge to the 30S subunit in the 70S ribosome.

One of the primary rRNA binding proteins. Required for association of the 30S and 50S subunits to form the 70S ribosome, for tRNA binding and peptide bond formation. It has been suggested to have peptidyltransferase activity; this is somewhat controversial. Makes several contacts with the 16S rRNA in the 70S ribosome. The polypeptide is Large ribosomal subunit protein uL2 (Prochlorococcus marinus (strain MIT 9301)).